The following is a 278-amino-acid chain: 4-deoxy-L-threo-5-hexosulose-uronate ketol-isomerase (278 aa).

Zn(2+) is bound by residues H196, H198, E203, and H245.

Belongs to the KduI family. Zn(2+) is required as a cofactor.

The catalysed reaction is 5-dehydro-4-deoxy-D-glucuronate = 3-deoxy-D-glycero-2,5-hexodiulosonate. It functions in the pathway glycan metabolism; pectin degradation; 2-dehydro-3-deoxy-D-gluconate from pectin: step 4/5. Catalyzes the isomerization of 5-dehydro-4-deoxy-D-glucuronate to 3-deoxy-D-glycero-2,5-hexodiulosonate. The chain is 4-deoxy-L-threo-5-hexosulose-uronate ketol-isomerase from Salmonella heidelberg (strain SL476).